A 289-amino-acid chain; its full sequence is Digeranylgeranylglyceryl phosphate synthase (289 aa).

8 helical membrane-spanning segments follow: residues 18–38, 47–67, 99–119, 120–140, 163–183, 218–238, 243–263, and 269–289; these read LMAG…LISG, AFPF…SGAG, FYFS…INSI, CGSI…TLKG, IFGF…ALAI, LAVL…FMSV, YIYL…QLLV, and KSSK…IAGV.

The protein belongs to the UbiA prenyltransferase family. DGGGP synthase subfamily. Requires Mg(2+) as cofactor.

Its subcellular location is the cell membrane. It carries out the reaction sn-3-O-(geranylgeranyl)glycerol 1-phosphate + (2E,6E,10E)-geranylgeranyl diphosphate = 2,3-bis-O-(geranylgeranyl)-sn-glycerol 1-phosphate + diphosphate. It functions in the pathway membrane lipid metabolism; glycerophospholipid metabolism. In terms of biological role, prenyltransferase that catalyzes the transfer of the geranylgeranyl moiety of geranylgeranyl diphosphate (GGPP) to the C2 hydroxyl of (S)-3-O-geranylgeranylglyceryl phosphate (GGGP). This reaction is the second ether-bond-formation step in the biosynthesis of archaeal membrane lipids. The sequence is that of Digeranylgeranylglyceryl phosphate synthase from Methanosarcina mazei (strain ATCC BAA-159 / DSM 3647 / Goe1 / Go1 / JCM 11833 / OCM 88) (Methanosarcina frisia).